We begin with the raw amino-acid sequence, 387 residues long: MNFHEYQAKQLFAEYGIPVPAGRIASSADEAVTAAKSLGNGPWMVKAQIHAGGRGKAGGVKFCKTTDEVKQAAAAMLGTKMATYQSAGVALPVNLVLVTEAGEITKELYLSVLVDRGTRSITYIASSEGGVDIEHVAAETPEKIQTLNVDFVEGLQPYQGRDIGFHLGLEAKQVNQLSKIMISLYQLFNDKDLSLIELNPLAILSNGDLYALDGKINSDDNATFRHKELAAMRDKTQEDETEVLASENDLNYVTMDGNIGCMVNGAGLAMATMDVIKLNGGEPANFLDVGGGATKERVTTAFKLILSSNKVKAIFVNIFGGIVRCDMIAEGIIAAVKEVGVKVPVIVRLEGTNVDAGKQLLATSGLAIIPADDINDGAKKAVAAVTV.

Residues 9 to 244 (KQLFAEYGIP…KTQEDETEVL (236 aa)) form the ATP-grasp domain. ATP is bound by residues Lys46, 53–55 (GRG), Gly102, and Glu107. The Mg(2+) site is built by Asn199 and Asp213. Substrate contacts are provided by residues Asn264 and 321–323 (GIV).

It belongs to the succinate/malate CoA ligase beta subunit family. As to quaternary structure, heterotetramer of two alpha and two beta subunits. Mg(2+) is required as a cofactor.

The enzyme catalyses succinate + ATP + CoA = succinyl-CoA + ADP + phosphate. It catalyses the reaction GTP + succinate + CoA = succinyl-CoA + GDP + phosphate. Its pathway is carbohydrate metabolism; tricarboxylic acid cycle; succinate from succinyl-CoA (ligase route): step 1/1. In terms of biological role, succinyl-CoA synthetase functions in the citric acid cycle (TCA), coupling the hydrolysis of succinyl-CoA to the synthesis of either ATP or GTP and thus represents the only step of substrate-level phosphorylation in the TCA. The beta subunit provides nucleotide specificity of the enzyme and binds the substrate succinate, while the binding sites for coenzyme A and phosphate are found in the alpha subunit. In Xylella fastidiosa (strain 9a5c), this protein is Succinate--CoA ligase [ADP-forming] subunit beta.